We begin with the raw amino-acid sequence, 229 residues long: Sec-independent protein translocase protein TatB (229 aa).

A helical membrane pass occupies residues 1 to 21; that stretch reads MFDIGFSELLLFGVIALIVLG. The tract at residues 90 to 131 is disordered; it reads EFEHSQSQNLKTSDKAASPANQANNDSAIQNNNEPATFSYAY. Over residues 108 to 131 the composition is skewed to polar residues; sequence PANQANNDSAIQNNNEPATFSYAY.

Belongs to the TatB family. As to quaternary structure, the Tat system comprises two distinct complexes: a TatABC complex, containing multiple copies of TatA, TatB and TatC subunits, and a separate TatA complex, containing only TatA subunits. Substrates initially bind to the TatABC complex, which probably triggers association of the separate TatA complex to form the active translocon.

The protein resides in the cell inner membrane. In terms of biological role, part of the twin-arginine translocation (Tat) system that transports large folded proteins containing a characteristic twin-arginine motif in their signal peptide across membranes. Together with TatC, TatB is part of a receptor directly interacting with Tat signal peptides. TatB may form an oligomeric binding site that transiently accommodates folded Tat precursor proteins before their translocation. This Psychrobacter arcticus (strain DSM 17307 / VKM B-2377 / 273-4) protein is Sec-independent protein translocase protein TatB.